The primary structure comprises 316 residues: Ribosomal protein L11 methyltransferase (316 aa).

Residues Thr157, Gly178, Asp200, and Asn243 each coordinate S-adenosyl-L-methionine.

The protein belongs to the methyltransferase superfamily. PrmA family.

It localises to the cytoplasm. The catalysed reaction is L-lysyl-[protein] + 3 S-adenosyl-L-methionine = N(6),N(6),N(6)-trimethyl-L-lysyl-[protein] + 3 S-adenosyl-L-homocysteine + 3 H(+). Functionally, methylates ribosomal protein L11. The chain is Ribosomal protein L11 methyltransferase from Streptococcus pneumoniae (strain P1031).